A 188-amino-acid chain; its full sequence is MATVERRVQVDPTDKRIHLQPQYEGDVGYGYGYGGRADYKSSGPSSNQIVALIVGVPVGGSLLALAGLTLAGSVIGLMLSVPLFLLFSPVIVPAAITIGLAVTAILASGLFGLTGLSSVSWVLNYLRGTSDTVPEQLDYAKRRMADAVGYAGQKGKEMGQYVQDKAHEAHDTSLTTETTEPGKTRRHT.

Residue Ala-2 is modified to N-acetylalanine. The interval 2 to 51 is polar; the sequence is ATVERRVQVDPTDKRIHLQPQYEGDVGYGYGYGGRADYKSSGPSSNQIVA. 3 helical membrane-spanning segments follow: residues 49 to 69, 74 to 94, and 96 to 116; these read IVALIVGVPVGGSLLALAGLT, VIGLMLSVPLFLLFSPVIVPA, and ITIGLAVTAILASGLFGLTGL. Residues 52 to 125 form a hydrophobic region; the sequence is LIVGVPVGGS…LSSVSWVLNY (74 aa). The tract at residues 164–188 is disordered; that stretch reads DKAHEAHDTSLTTETTEPGKTRRHT. Polar residues predominate over residues 172–181; it reads TSLTTETTEP.

Belongs to the oleosin family.

Its subcellular location is the lipid droplet. It is found in the membrane. May have a structural role to stabilize the lipid body during desiccation of the seed by preventing coalescence of the oil. Probably interacts with both lipid and phospholipid moieties of lipid bodies. May also provide recognition signals for specific lipase anchorage in lipolysis during seedling growth. The sequence is that of Oleosin S2-2 (S2) from Brassica napus (Rape).